The primary structure comprises 491 residues: Probable glycine dehydrogenase (decarboxylating) subunit 2 (491 aa).

Position 273 is an N6-(pyridoxal phosphate)lysine (lysine 273).

This sequence belongs to the GcvP family. C-terminal subunit subfamily. As to quaternary structure, the glycine cleavage system is composed of four proteins: P, T, L and H. In this organism, the P 'protein' is a heterodimer of two subunits. It depends on pyridoxal 5'-phosphate as a cofactor.

The enzyme catalyses N(6)-[(R)-lipoyl]-L-lysyl-[glycine-cleavage complex H protein] + glycine + H(+) = N(6)-[(R)-S(8)-aminomethyldihydrolipoyl]-L-lysyl-[glycine-cleavage complex H protein] + CO2. Its function is as follows. The glycine cleavage system catalyzes the degradation of glycine. The P protein binds the alpha-amino group of glycine through its pyridoxal phosphate cofactor; CO(2) is released and the remaining methylamine moiety is then transferred to the lipoamide cofactor of the H protein. This Bacillus cereus (strain B4264) protein is Probable glycine dehydrogenase (decarboxylating) subunit 2.